We begin with the raw amino-acid sequence, 30 residues long: uncharacterized protein (30 aa).

The tract at residues methionine 1–tryptophan 30 is disordered.

This is an uncharacterized protein from Saccharomyces cerevisiae (strain ATCC 204508 / S288c) (Baker's yeast).